We begin with the raw amino-acid sequence, 840 residues long: SLIT and NTRK-like protein 6 (840 aa).

A signal peptide spans 1–18 (MKLWTYLLYPSLLACLSL). Residues 22-67 (SPMPSVRGSCDTLCNCEEKDGIMIINCEEKGINKLSQISVPPSRPF) form the LRRNT 1 domain. Residues 23-609 (PMPSVRGSCD…LTDAVPLSVL (587 aa)) lie on the Extracellular side of the membrane. LRR repeat units follow at residues 89 to 110 (NALS…AFNG), 113 to 134 (LLKQ…TFHG), 137 to 158 (NLEF…AFSK), 161 to 182 (RLKV…IFRF), and 184 to 205 (PLTH…GFLE). One can recognise an LRRCT 1 domain in the interval 218–269 (NKWACNCELLQLKNWLENMPPQSIIGDVICYSPPPFKGSVLSRLKKESFCPT). In terms of domain architecture, LRRNT 2 spans 319–360 (PSTQLPVPYCPIPCNCKVLSPSGLLIHCQERNIESLSDLQPP). 6 LRR repeats span residues 363-384 (NPRK…DLTD), 387-408 (TLEM…SFMN), 411-432 (RLQK…MFLG), 435-456 (SLEY…TFNP), 459-480 (KLKV…IFLG), and 482-503 (PLTR…NILD). The 52-residue stretch at 516–567 (NPWDCSCDLVGLQQWIHKLGKGTMTDDILCTSPGHLDKKELKALNSDLLCPG) folds into the LRRCT 2 domain. Residues 610–630 (ILGLLIVFITIVFCAAGIVVF) traverse the membrane as a helical segment. Topologically, residues 631–840 (VLHRRRRYKK…DYLEVLEQQT (210 aa)) are cytoplasmic. Residues 717–726 (QRSLLERENH) show a composition bias toward basic and acidic residues. The disordered stretch occupies residues 717-736 (QRSLLERENHSPLTGSNMKY). Over residues 727-736 (SPLTGSNMKY) the composition is skewed to polar residues.

It belongs to the SLITRK family. In terms of tissue distribution, in the embryo, expressed in otic cyst, lateral trunk epidermis and underlying mesodermal tissue, limb bud, maxillary process, cochlea, retina, tongue, tooth primordium, central nervous system, and primordia of visceral organs including lung, gastrointestinal tract and pancreas. In the central nervous system, expressed primarily in dorsal thalamus, cerebellum and medulla.

The protein localises to the cell membrane. In terms of biological role, regulator of neurite outgrowth required for normal hearing and vision. This is SLIT and NTRK-like protein 6 (Slitrk6) from Mus musculus (Mouse).